We begin with the raw amino-acid sequence, 335 residues long: Acetyl-coenzyme A carboxylase carboxyl transferase subunit alpha (335 aa).

The region spanning 40 to 294 is the CoA carboxyltransferase C-terminal domain; it reads QLETLATRRR…KGAIEKHLNE (255 aa).

Belongs to the AccA family. As to quaternary structure, acetyl-CoA carboxylase is a heterohexamer composed of biotin carboxyl carrier protein (AccB), biotin carboxylase (AccC) and two subunits each of ACCase subunit alpha (AccA) and ACCase subunit beta (AccD).

It localises to the cytoplasm. The catalysed reaction is N(6)-carboxybiotinyl-L-lysyl-[protein] + acetyl-CoA = N(6)-biotinyl-L-lysyl-[protein] + malonyl-CoA. The protein operates within lipid metabolism; malonyl-CoA biosynthesis; malonyl-CoA from acetyl-CoA: step 1/1. In terms of biological role, component of the acetyl coenzyme A carboxylase (ACC) complex. First, biotin carboxylase catalyzes the carboxylation of biotin on its carrier protein (BCCP) and then the CO(2) group is transferred by the carboxyltransferase to acetyl-CoA to form malonyl-CoA. This chain is Acetyl-coenzyme A carboxylase carboxyl transferase subunit alpha, found in Prochlorococcus marinus subsp. pastoris (strain CCMP1986 / NIES-2087 / MED4).